We begin with the raw amino-acid sequence, 246 residues long: Ribonuclease 3 (246 aa).

The 126-residue stretch at 10 to 135 folds into the RNase III domain; sequence LENFLTLNNI…FVAAIYLDLG (126 aa). Glutamate 50 contacts Mg(2+). The active site involves aspartate 54. Residues aspartate 121 and glutamate 124 each coordinate Mg(2+). Glutamate 124 is a catalytic residue. The DRBM domain maps to 161–230; that stretch reads DPKSSFQEYI…ATRALETLKA (70 aa).

This sequence belongs to the ribonuclease III family. In terms of assembly, homodimer. Requires Mg(2+) as cofactor.

The protein resides in the cytoplasm. The catalysed reaction is Endonucleolytic cleavage to 5'-phosphomonoester.. Its function is as follows. Digests double-stranded RNA. Involved in the processing of primary rRNA transcript to yield the immediate precursors to the large and small rRNAs (23S and 16S). Processes some mRNAs, and tRNAs when they are encoded in the rRNA operon. Processes pre-crRNA and tracrRNA of type II CRISPR loci if present in the organism. This Mycoplasma mobile (strain ATCC 43663 / 163K / NCTC 11711) (Mesomycoplasma mobile) protein is Ribonuclease 3.